Reading from the N-terminus, the 767-residue chain is E3 ubiquitin-protein ligase pub1 (767 aa).

The region spanning 1-111 is the C2 domain; the sequence is MSNSAQSRRI…AIGGDEMLTR (111 aa). The segment covering 138 to 158 has biased composition (polar residues); that stretch reads LQVPSSAASGARTQRTSITND. 2 disordered regions span residues 138 to 216 and 252 to 306; these read LQVP…RRTD and SASS…RPYF. T156 is subject to Phosphothreonine. A compositionally biased stretch (low complexity) spans 159–176; sequence PQSSQSSSVSRNPASSRA. Residue S178 is modified to Phosphoserine. The residue at position 180 (T180) is a Phosphothreonine. Residues 184 to 194 show a composition bias toward low complexity; it reads APAASPASSEP. One can recognise a WW 1 domain in the interval 211–236; the sequence is WERRTDNLGRTYYVDHNTRSTTWIRP. Residues 257–286 are compositionally biased toward polar residues; it reads NVTEGVQPSSSNAARRTEASVLTSNATTAG. 2 consecutive WW domains span residues 294–319 and 351–376; these read WEQRYTPEGRPYFVDHNTRTTTWVDP and WEMRLTNTARVYFVDHNTKTTTWDDP. The 305-residue stretch at 463–767 folds into the HECT domain; sequence FLLSHEMFNP…VEETIGFGQE (305 aa). The Glycyl thioester intermediate role is filled by C735.

It localises to the membrane. It is found in the cytoplasm. It catalyses the reaction S-ubiquitinyl-[E2 ubiquitin-conjugating enzyme]-L-cysteine + [acceptor protein]-L-lysine = [E2 ubiquitin-conjugating enzyme]-L-cysteine + N(6)-ubiquitinyl-[acceptor protein]-L-lysine.. The protein operates within protein modification; protein ubiquitination. In terms of biological role, E3 ubiquitin-protein ligase which accepts ubiquitin from an E2 ubiquitin-conjugating enzyme in the form of a thioester and then directly transfers the ubiquitin to targeted substrates. Regulates ubiquitination of cdc25. This Schizosaccharomyces pombe (strain 972 / ATCC 24843) (Fission yeast) protein is E3 ubiquitin-protein ligase pub1 (pub1).